A 421-amino-acid polypeptide reads, in one-letter code: uncharacterized protein (421 aa).

This is an uncharacterized protein from Escherichia coli (strain K12).